The primary structure comprises 457 residues: Transcription factor PCF7 (457 aa).

Residues 58–84 (STLHYLLQEKERAQQAHEQLQIYQQQQ) adopt a coiled-coil conformation. A disordered region spans residues 95-119 (RQPASRGPGGGGGGGDGGGSSGEST). Residues 101–115 (GPGGGGGGGDGGGSS) are compositionally biased toward gly residues. Residues 140–198 (RKDRHSKVCTARGLRDRRVRLAAHTAIRFYDVQDRLGYDRPSKAVDWLMRNAKAAIDEL) enclose the TCP domain. Disordered stretches follow at residues 199–231 (PDRA…GFGN) and 263–299 (KSLF…SNQQ). Low complexity-rich tracts occupy residues 210 to 225 (AAST…ATST) and 268 to 278 (SSSTASGAASA).

Forms homodimers and heterodimers.

It is found in the nucleus. In terms of biological role, transcription activator. Binds the promoter core sequence 5'-GGNCC-3'. The polypeptide is Transcription factor PCF7 (PCF7) (Oryza sativa subsp. japonica (Rice)).